The sequence spans 149 residues: Gamma-glutamylaminecyclotransferase (149 aa).

Position 7–10 (7–10) interacts with substrate; the sequence is YGTL. Glutamate 82 acts as the Proton acceptor in catalysis.

It belongs to the gamma-glutamylcyclotransferase family. As to quaternary structure, monomer.

It catalyses the reaction epsilon-(gamma-L-glutamyl)-L-lysine = 5-oxo-L-proline + L-lysine. Its function is as follows. Contributes to degradation of proteins cross-linked by transglutaminases by degrading the cross-link between a lysine and a glutamic acid residue. Catalyzes the formation of 5-oxo-L-proline from L-gamma-glutamyl-L-epsilon-lysine. Inactive with L-gamma-glutamyl-alpha-amino acid substrates such as L-gamma-glutamyl-L-alpha-cysteine and L-gamma-glutamyl-L-alpha-alanine. The polypeptide is Gamma-glutamylaminecyclotransferase (Ggact) (Mus musculus (Mouse)).